We begin with the raw amino-acid sequence, 63 residues long: Adipokinetic prohormone type 1 (63 aa).

The N-terminal stretch at Met1–Ala22 is a signal peptide. Gln23 carries the post-translational modification Pyrrolidone carboxylic acid. The residue at position 32 (Thr32) is a Threonine amide.

The protein belongs to the AKH/HRTH/RPCH family. Adipokinetic hormone precursor-related peptide (APRP) can form three type of disulfide-bond dimers: p1 (alpha-alpha), p2 (alpha-beta), and p3 (beta-beta).

The protein resides in the secreted. Functionally, this hormone, released from cells in the corpora cardiaca, causes release of diglycerides from the fat body and stimulation of muscles to use these diglycerides as an energy source during energy-demanding processes. The polypeptide is Adipokinetic prohormone type 1 (Schistocerca nitens (Vagrant locust)).